The sequence spans 82 residues: UPF0410 protein YeaQ (82 aa).

2 helical membrane-spanning segments follow: residues 26–46 (GGGF…GGWI) and 57–77 (GFNF…LFIY).

It belongs to the UPF0410 family.

It is found in the cell inner membrane. The sequence is that of UPF0410 protein YeaQ (yeaQ) from Escherichia coli O157:H7.